Reading from the N-terminus, the 594-residue chain is Interactor of HORMAD1 protein 1 (594 aa).

Coiled coils occupy residues 109–135 (VGKS…SETL), 165–189 (QSIL…NDLV), and 219–245 (EMKS…CEQL). Basic and acidic residues predominate over residues 434–443 (VEMRGKDKKQ). A disordered region spans residues 434–454 (VEMRGKDKKQQPRKAHRAHRG). Basic residues predominate over residues 444–454 (QPRKAHRAHRG). A phosphoserine mark is found at Ser588 and Ser589.

In terms of assembly, part of the MCD recombinosome complex, at least composed of IHO1, REC114 and MEI4. Interacts with REC114. Interacts with MEI4. Interacts with HORMAD1. Interacts with ANKRD31.

The protein localises to the chromosome. Required for DNA double-strand breaks (DSBs) formation in unsynapsed regions during meiotic recombination. Probably acts by forming a complex with MEI4 and REC114, which activates DSBs formation in unsynapsed regions, an essential step to ensure completion of synapsis. Not required for HORMAD1 functions in pairing-independent synaptonemal complex formation, ATR recruitment to unsynapsed axes, meiotic silencing of unsynapsed chromatin (MSUC) or meiotic surveillance. This Homo sapiens (Human) protein is Interactor of HORMAD1 protein 1.